Here is a 368-residue protein sequence, read N- to C-terminus: MPLMGRKIKVLVVDDSAFMRKVLKDIINSDPELEVCGEARDGIEAIEMVQKCRPDVVTLDVEMPRMNGLDALRVIMKRYPVPVIMISALTQEGADATIKALEYGAIDFIPKPSSSISINMKELKDEIIAKIKEAAKVPRRFLELRRIRLLRVQKAKKVKPSVPARIAVAIAASTGGPQSLLKIFPKFPEDLKAGILLVQHMPPGFTRSFAKRLDSVSKIDVKEAEEGDVVEEGKAYVAPGDYHMEVTLRAGKPVITLNKKPKIHGVRPAADPMMITAAQVFGRRTVGVVMTGMGRDGAQGIVEIKKKGGITIAQDEKTSIIFGMPKAAIETGMVDYVVPLEKIPETVVKAVEIIRGGGNLGRHVTISR.

The Response regulatory domain occupies 9–126; the sequence is KVLVVDDSAF…SINMKELKDE (118 aa). Asp60 is subject to 4-aspartylphosphate. The 194-residue stretch at 161–354 folds into the CheB-type methylesterase domain; that stretch reads SVPARIAVAI…ETVVKAVEII (194 aa). Catalysis depends on residues Ser173, His200, and Asp296.

Belongs to the CheB family. Post-translationally, phosphorylated by CheA. Phosphorylation of the N-terminal regulatory domain activates the methylesterase activity.

Its subcellular location is the cytoplasm. The catalysed reaction is [protein]-L-glutamate 5-O-methyl ester + H2O = L-glutamyl-[protein] + methanol + H(+). It catalyses the reaction L-glutaminyl-[protein] + H2O = L-glutamyl-[protein] + NH4(+). Functionally, involved in chemotaxis. Part of a chemotaxis signal transduction system that modulates chemotaxis in response to various stimuli. Catalyzes the demethylation of specific methylglutamate residues introduced into the chemoreceptors (methyl-accepting chemotaxis proteins or MCP) by CheR. Also mediates the irreversible deamidation of specific glutamine residues to glutamic acid. The chain is Protein-glutamate methylesterase/protein-glutamine glutaminase from Pyrococcus horikoshii (strain ATCC 700860 / DSM 12428 / JCM 9974 / NBRC 100139 / OT-3).